We begin with the raw amino-acid sequence, 1023 residues long: NRPS-like oxidoreductase fscA (1023 aa).

The adenylation stretch occupies residues 54–454 (TYGDLNGMAT…NHPFVRQCMV (401 aa)). The 84-residue stretch at 554–637 (PEDDVIGRQI…SIANHVRSAQ (84 aa)) folds into the Carrier domain. Residue S596 is modified to O-(pantetheine 4'-phosphoryl)serine. The Thioester reductase (TE) domain occupies 685–901 (LTGGAGYLGQ…VYDESTTRAR (217 aa)).

This sequence belongs to the NRP synthetase family. The cofactor is pantetheine 4'-phosphate.

The protein operates within secondary metabolite biosynthesis. Functionally, NRPS-like oxidoreductasee; part of the fragmented gene cluster that mediates the biosynthesis of fusarochromene, a tryptophan-derived metabolite closely related to a group of mycotoxins including fusarochromanone. Within the pathway, fscA acts as an oxidoreductase that reduces the carboxyl group of 4-hydroxykyrunenine to primary alcohol. The first step of the pathway is the epimerization of L-tryptophan to D-tryptophan in the presence of the NRPS-like tryptophan epimerase fscC. D-tryptophan is subsequently hydroxylated by the tryptophan 6-hydroxylase fscE to yield 6-hydroxytryptophan. The pyrrole ring undergoes cleavaged by the tryptophan 2,3-dioxygenase fscD and is finally converted to 4-hydroxykyrunenine by the hydrolase fscH. The NRPS-like oxidoreductase fscA reduces the carboxyl group to primary alcohol and the DMATS-type prenyltransferase fscG performs prenylation, followed by the formation of a chromene ring catalyzed by the oxidoreductase fscI, which leads to desacetylfusarochromene. Epoxidation by fscF and rearrangement reactions of chromene double bonds convert compound desacetylfusarochromene to fusarochromanones. Although specific acetyltransferases were not found near the fsc gene cluster, several predicted enzymes containing the N-acetyltransferase superfamily domain are present in the genome of F.equiseti. These predicted enzymes may have the potential to convert desacetylfusarochromene to fusarochromene. This is NRPS-like oxidoreductase fscA from Fusarium equiseti (Fusarium scirpi).